We begin with the raw amino-acid sequence, 512 residues long: Cytochrome P450 1A1 (512 aa).

Positions 29–40 (SRPRVPKGLKNP) are mitochondrial targeting signal. A glycan (O-linked (GlcNAc) serine) is linked at Ser-67. Residue Phe-224 coordinates substrate. Cys-457 serves as a coordination point for heme.

The protein belongs to the cytochrome P450 family. As to quaternary structure, interacts with cytosolic chaperones HSP70 and HSP90; this interaction is required for initial targeting to mitochondria. Interacts (via mitochondrial targeting signal) with TOMM40 (via N-terminus); this interaction is required for translocation across the mitochondrial outer membrane. The cofactor is heme.

The protein resides in the endoplasmic reticulum membrane. It localises to the mitochondrion inner membrane. Its subcellular location is the microsome membrane. The protein localises to the cytoplasm. It catalyses the reaction an organic molecule + reduced [NADPH--hemoprotein reductase] + O2 = an alcohol + oxidized [NADPH--hemoprotein reductase] + H2O + H(+). The enzyme catalyses estrone + reduced [NADPH--hemoprotein reductase] + O2 = 2-hydroxyestrone + oxidized [NADPH--hemoprotein reductase] + H2O + H(+). It carries out the reaction estrone + reduced [NADPH--hemoprotein reductase] + O2 = 4-hydroxyestrone + oxidized [NADPH--hemoprotein reductase] + H2O + H(+). The catalysed reaction is estrone + reduced [NADPH--hemoprotein reductase] + O2 = 6alpha-hydroxyestrone + oxidized [NADPH--hemoprotein reductase] + H2O + H(+). It catalyses the reaction estrone + reduced [NADPH--hemoprotein reductase] + O2 = 15alpha-hydroxyestrone + oxidized [NADPH--hemoprotein reductase] + H2O + H(+). The enzyme catalyses estrone + reduced [NADPH--hemoprotein reductase] + O2 = 16alpha-hydroxyestrone + oxidized [NADPH--hemoprotein reductase] + H2O + H(+). It carries out the reaction 17beta-estradiol + reduced [NADPH--hemoprotein reductase] + O2 = 2-hydroxy-17beta-estradiol + oxidized [NADPH--hemoprotein reductase] + H2O + H(+). The catalysed reaction is 17beta-estradiol + reduced [NADPH--hemoprotein reductase] + O2 = 4-hydroxy-17beta-estradiol + oxidized [NADPH--hemoprotein reductase] + H2O + H(+). It catalyses the reaction 17beta-estradiol + reduced [NADPH--hemoprotein reductase] + O2 = 6alpha-hydroxy-17beta-estradiol + oxidized [NADPH--hemoprotein reductase] + H2O + H(+). The enzyme catalyses 17beta-estradiol + reduced [NADPH--hemoprotein reductase] + O2 = 7alpha-hydroxy-17beta-estradiol + oxidized [NADPH--hemoprotein reductase] + H2O + H(+). It carries out the reaction 17beta-estradiol + reduced [NADPH--hemoprotein reductase] + O2 = 15alpha-hydroxy-17beta-estradiol + oxidized [NADPH--hemoprotein reductase] + H2O + H(+). The catalysed reaction is (5Z,8Z,11Z)-eicosatrienoate + reduced [NADPH--hemoprotein reductase] + O2 = 19-hydroxy-(5Z,8Z,11Z)-eicosatrienoate + oxidized [NADPH--hemoprotein reductase] + H2O + H(+). It catalyses the reaction (5Z,8Z,11Z,14Z)-eicosatetraenoate + reduced [NADPH--hemoprotein reductase] + O2 = 16-hydroxy-(5Z,8Z,11Z,14Z)-eicosatetraenoate + oxidized [NADPH--hemoprotein reductase] + H2O + H(+). The enzyme catalyses (5Z,8Z,11Z,14Z)-eicosatetraenoate + reduced [NADPH--hemoprotein reductase] + O2 = 17-hydroxy-(5Z,8Z,11Z,14Z)-eicosatetraenoate + oxidized [NADPH--hemoprotein reductase] + H2O + H(+). It carries out the reaction (5Z,8Z,11Z,14Z)-eicosatetraenoate + reduced [NADPH--hemoprotein reductase] + O2 = 18-hydroxy-(5Z,8Z,11Z,14Z)-eicosatetraenoate + oxidized [NADPH--hemoprotein reductase] + H2O + H(+). The catalysed reaction is (5Z,8Z,11Z,14Z)-eicosatetraenoate + reduced [NADPH--hemoprotein reductase] + O2 = 19-hydroxy-(5Z,8Z,11Z,14Z)-eicosatetraenoate + oxidized [NADPH--hemoprotein reductase] + H2O + H(+). It catalyses the reaction (5Z,8Z,11Z,14Z,17Z)-eicosapentaenoate + reduced [NADPH--hemoprotein reductase] + O2 = 19-hydroxy-(5Z,8Z,11Z,14Z,17Z)-eicosapentaenoate + oxidized [NADPH--hemoprotein reductase] + H2O + H(+). The enzyme catalyses (5Z,8Z,11Z,14Z)-eicosatetraenoate + reduced [NADPH--hemoprotein reductase] + O2 = (8R,9S)-epoxy-(5Z,11Z,14Z)-eicosatrienoate + oxidized [NADPH--hemoprotein reductase] + H2O + H(+). It carries out the reaction (5Z,8Z,11Z,14Z)-eicosatetraenoate + reduced [NADPH--hemoprotein reductase] + O2 = (11R,12S)-epoxy-(5Z,8Z,14Z)-eicosatrienoate + oxidized [NADPH--hemoprotein reductase] + H2O + H(+). The catalysed reaction is (5Z,8Z,11Z,14Z)-eicosatetraenoate + reduced [NADPH--hemoprotein reductase] + O2 = (14S,15R)-epoxy-(5Z,8Z,11Z)-eicosatrienoate + oxidized [NADPH--hemoprotein reductase] + H2O + H(+). It catalyses the reaction (5Z,8Z,11Z,14Z)-eicosatetraenoate + reduced [NADPH--hemoprotein reductase] + O2 = (14R,15S)-epoxy-(5Z,8Z,11Z)-eicosatrienoate + oxidized [NADPH--hemoprotein reductase] + H2O + H(+). The enzyme catalyses (5Z,8Z,11Z,14Z,17Z)-eicosapentaenoate + reduced [NADPH--hemoprotein reductase] + O2 = (17R,18S)-epoxy-(5Z,8Z,11Z,14Z)-eicosatetraenoate + oxidized [NADPH--hemoprotein reductase] + H2O + H(+). It carries out the reaction (4Z,7Z,10Z,13Z,16Z,19Z)-docosahexaenoate + reduced [NADPH--hemoprotein reductase] + O2 = (19S,20R)-epoxy-(4Z,7Z,10Z,13Z,16Z)-docosapentaenoate + oxidized [NADPH--hemoprotein reductase] + H2O + H(+). The catalysed reaction is (4Z,7Z,10Z,13Z,16Z,19Z)-docosahexaenoate + reduced [NADPH--hemoprotein reductase] + O2 = (19R,20S)-epoxy-(4Z,7Z,10Z,13Z,16Z)-docosapentaenoate + oxidized [NADPH--hemoprotein reductase] + H2O + H(+). It catalyses the reaction all-trans-retinol + reduced [NADPH--hemoprotein reductase] + O2 = all-trans-retinal + oxidized [NADPH--hemoprotein reductase] + 2 H2O + H(+). The enzyme catalyses all-trans-retinal + reduced [NADPH--hemoprotein reductase] + O2 = all-trans-retinoate + oxidized [NADPH--hemoprotein reductase] + H2O + 2 H(+). It carries out the reaction (13S)-hydroperoxy-(9Z,11E)-octadecadienoate = 13-oxo-(9Z,11E)-octadecadienoate + H2O. The catalysed reaction is (12S)-hydroperoxy-(5Z,8Z,10E,14Z)-eicosatetraenoate = 12-oxo-(5Z,8Z,10E,14Z)-eicosatetraenoate + H2O. It catalyses the reaction (15S)-hydroperoxy-(5Z,8Z,11Z,13E)-eicosatetraenoate = 15-oxo-(5Z,8Z,11Z,13E)-eicosatetraenoate + H2O. The enzyme catalyses (5S)-hydroperoxy-(6E,8Z,11Z,14Z)-eicosatetraenoate = 5-oxo-(6E,8Z,11Z,14Z)-eicosatetraenoate + H2O. Its pathway is steroid hormone biosynthesis. It participates in lipid metabolism; fatty acid metabolism. It functions in the pathway cofactor metabolism; retinol metabolism. Functionally, a cytochrome P450 monooxygenase involved in the metabolism of various endogenous substrates, including fatty acids, steroid hormones and vitamins. Mechanistically, uses molecular oxygen inserting one oxygen atom into a substrate, and reducing the second into a water molecule, with two electrons provided by NADPH via cytochrome P450 reductase (CPR; NADPH-ferrihemoprotein reductase). Catalyzes the hydroxylation of carbon-hydrogen bonds. Exhibits high catalytic activity for the formation of hydroxyestrogens from estrone (E1) and 17beta-estradiol (E2), namely 2-hydroxy E1 and E2, as well as D-ring hydroxylated E1 and E2 at the C15alpha and C16alpha positions. Displays different regioselectivities for polyunsaturated fatty acids (PUFA) hydroxylation. Catalyzes the epoxidation of double bonds of certain PUFA. Converts arachidonic acid toward epoxyeicosatrienoic acid (EET) regioisomers, 8,9-, 11,12-, and 14,15-EET, that function as lipid mediators in the vascular system. Displays an absolute stereoselectivity in the epoxidation of eicosapentaenoic acid (EPA) producing the 17(R),18(S) enantiomer. May play an important role in all-trans retinoic acid biosynthesis in extrahepatic tissues. Catalyzes two successive oxidative transformation of all-trans retinol to all-trans retinal and then to the active form all-trans retinoic acid. May also participate in eicosanoids metabolism by converting hydroperoxide species into oxo metabolites (lipoxygenase-like reaction, NADPH-independent). The chain is Cytochrome P450 1A1 (CYP1A1) from Macaca mulatta (Rhesus macaque).